The sequence spans 584 residues: DNA damage-binding protein 2 (584 aa).

Residues M1–R87 form a disordered region. The span at R8–G20 shows a compositional bias: basic residues. Composition is skewed to acidic residues over residues P25–Q35 and D45–A66. The CCHC-type zinc finger occupies K122–H140. 7 WD repeats span residues F192–T232, V236–N278, S288–D327, K333–A373, A378–P418, E438–V481, and P484–E523. The DWD box signature appears at L351–R366. Residues T517–E532 show a composition bias toward basic and acidic residues. The tract at residues T517–V584 is disordered. Positions K562–V584 are enriched in basic residues.

It belongs to the WD repeat DDB2/WDR76 family. In terms of assembly, component of the UV-DDB complex, which is composed of DDB1 and DDB2. As to expression, expressed in proliferating tissues such as shoot apical meristem (SAM), root tips and young leaves. Not detected in mature leaves.

The protein localises to the nucleus. In terms of biological role, required for DNA repair. Binds to DDB1 to form the UV-damaged DNA-binding protein complex (the UV-DDB complex). The UV-DDB complex may recognize UV-induced DNA damage and recruit proteins of the nucleotide excision repair pathway (the NER pathway) to initiate DNA repair. May function as the substrate recognition module for a DCX (DDB1-CUL4-X-box) E3 ubiquitin-protein ligase complex. The sequence is that of DNA damage-binding protein 2 from Oryza sativa subsp. japonica (Rice).